A 378-amino-acid polypeptide reads, in one-letter code: MSHLDNGFRSLTLQRFPATDDVNPLQAWEAADEYLLQQLDDTEIRGPVLILNDAFGALSCALAEHKPYSIGDSYISELATRENLRLNGIDESSVKFLDSTADYPQQPGVVLIKVPKTLALLEQQLRALRKVVTPQTRIIAGAKARDIHTSTLELFEKVLGPTTTTLAWKKARLINCTFNEPPLADAPQTVSWKLEGTDWTIHNHANVFSRTGLDIGARFFMQHLPENLEGEIVDLGCGNGVIGLTLLDKNPQAKVVFVDESPMAVASSRLNVETNMPEALDRCEFMINNALSGVEPFRFNAVLCNPPFHQQHALTDNVAWEMFHHARRCLKINGELYIVANRHLDYFHKLKKIFGNCTTIATNNKFVVLKAVKLGRRR.

Belongs to the methyltransferase superfamily. RlmG family.

The protein resides in the cytoplasm. It catalyses the reaction guanosine(1835) in 23S rRNA + S-adenosyl-L-methionine = N(2)-methylguanosine(1835) in 23S rRNA + S-adenosyl-L-homocysteine + H(+). In terms of biological role, specifically methylates the guanine in position 1835 (m2G1835) of 23S rRNA. This Escherichia coli O157:H7 protein is Ribosomal RNA large subunit methyltransferase G.